The sequence spans 208 residues: N-(5'-phosphoribosyl)anthranilate isomerase (208 aa).

It belongs to the TrpF family.

The catalysed reaction is N-(5-phospho-beta-D-ribosyl)anthranilate = 1-(2-carboxyphenylamino)-1-deoxy-D-ribulose 5-phosphate. The protein operates within amino-acid biosynthesis; L-tryptophan biosynthesis; L-tryptophan from chorismate: step 3/5. This chain is N-(5'-phosphoribosyl)anthranilate isomerase, found in Staphylococcus haemolyticus (strain JCSC1435).